Consider the following 344-residue polypeptide: Glycerol-3-phosphate dehydrogenase [NAD(P)+] (344 aa).

Residues S11, W12, H32, R33, and K106 each contribute to the NADPH site. Residues K106, G136, and S138 each coordinate sn-glycerol 3-phosphate. A140 serves as a coordination point for NADPH. K192, D245, S255, R256, and N257 together coordinate sn-glycerol 3-phosphate. K192 functions as the Proton acceptor in the catalytic mechanism. NADPH is bound at residue R256. NADPH contacts are provided by V280 and E282.

This sequence belongs to the NAD-dependent glycerol-3-phosphate dehydrogenase family.

The protein resides in the cytoplasm. The enzyme catalyses sn-glycerol 3-phosphate + NAD(+) = dihydroxyacetone phosphate + NADH + H(+). It carries out the reaction sn-glycerol 3-phosphate + NADP(+) = dihydroxyacetone phosphate + NADPH + H(+). The protein operates within membrane lipid metabolism; glycerophospholipid metabolism. Functionally, catalyzes the reduction of the glycolytic intermediate dihydroxyacetone phosphate (DHAP) to sn-glycerol 3-phosphate (G3P), the key precursor for phospholipid synthesis. The chain is Glycerol-3-phosphate dehydrogenase [NAD(P)+] from Geobacillus kaustophilus (strain HTA426).